We begin with the raw amino-acid sequence, 182 residues long: Ribosome maturation factor RimM (182 aa).

The PRC barrel domain maps to 102–182 (EEGDYYWKDL…TIEVDWDPGF (81 aa)).

The protein belongs to the RimM family. As to quaternary structure, binds ribosomal protein uS19.

It is found in the cytoplasm. Functionally, an accessory protein needed during the final step in the assembly of 30S ribosomal subunit, possibly for assembly of the head region. Essential for efficient processing of 16S rRNA. May be needed both before and after RbfA during the maturation of 16S rRNA. It has affinity for free ribosomal 30S subunits but not for 70S ribosomes. This chain is Ribosome maturation factor RimM, found in Salmonella gallinarum (strain 287/91 / NCTC 13346).